The primary structure comprises 550 residues: CTP synthase (550 aa).

The segment at 1–270 is amidoligase domain; sequence MTKYVFVTGG…DNIVCEALGL (270 aa). Ser-13 serves as a coordination point for CTP. Position 13 (Ser-13) interacts with UTP. Residues 14-19 and Asp-71 contribute to the ATP site; that span reads SLGKGI. Asp-71 and Glu-144 together coordinate Mg(2+). Residues 151–153, 191–196, and Lys-227 each bind CTP; these read DIE and KTKPTQ. Residues 191–196 and Lys-227 each bind UTP; that span reads KTKPTQ. Residues 295 to 545 enclose the Glutamine amidotransferase type-1 domain; sequence TIGMVGKYVD…IRAALEHKAQ (251 aa). Gly-356 lines the L-glutamine pocket. Cys-383 acts as the Nucleophile; for glutamine hydrolysis in catalysis. L-glutamine contacts are provided by residues 384–387 and Glu-407; that span reads LGMQ. Positions 430–459 are disordered; the sequence is VERRDNSSDLGGTMRKGAQRCPIRPGTRAQ. Arg-473 contributes to the L-glutamine binding site. Catalysis depends on residues His-518 and Glu-520.

The protein belongs to the CTP synthase family. As to quaternary structure, homotetramer.

The enzyme catalyses UTP + L-glutamine + ATP + H2O = CTP + L-glutamate + ADP + phosphate + 2 H(+). It catalyses the reaction L-glutamine + H2O = L-glutamate + NH4(+). The catalysed reaction is UTP + NH4(+) + ATP = CTP + ADP + phosphate + 2 H(+). The protein operates within pyrimidine metabolism; CTP biosynthesis via de novo pathway; CTP from UDP: step 2/2. Allosterically activated by GTP, when glutamine is the substrate; GTP has no effect on the reaction when ammonia is the substrate. The allosteric effector GTP functions by stabilizing the protein conformation that binds the tetrahedral intermediate(s) formed during glutamine hydrolysis. Inhibited by the product CTP, via allosteric rather than competitive inhibition. In terms of biological role, catalyzes the ATP-dependent amination of UTP to CTP with either L-glutamine or ammonia as the source of nitrogen. Regulates intracellular CTP levels through interactions with the four ribonucleotide triphosphates. In Bordetella parapertussis (strain 12822 / ATCC BAA-587 / NCTC 13253), this protein is CTP synthase.